Reading from the N-terminus, the 164-residue chain is Pyruvoyl-dependent arginine decarboxylase (164 aa).

Ser52 bears the Pyruvic acid (Ser) mark.

The protein belongs to the PdaD family. Requires pyruvate as cofactor.

It carries out the reaction L-arginine + H(+) = agmatine + CO2. This Methanococcus maripaludis (strain C5 / ATCC BAA-1333) protein is Pyruvoyl-dependent arginine decarboxylase.